The following is a 342-amino-acid chain: Succinylglutamate desuccinylase (342 aa).

Residues histidine 63, glutamate 66, and histidine 155 each contribute to the Zn(2+) site. The active site involves glutamate 219.

The protein belongs to the AspA/AstE family. Succinylglutamate desuccinylase subfamily. It depends on Zn(2+) as a cofactor.

The enzyme catalyses N-succinyl-L-glutamate + H2O = L-glutamate + succinate. It functions in the pathway amino-acid degradation; L-arginine degradation via AST pathway; L-glutamate and succinate from L-arginine: step 5/5. Functionally, transforms N(2)-succinylglutamate into succinate and glutamate. This Vibrio vulnificus (strain YJ016) protein is Succinylglutamate desuccinylase.